Here is an 86-residue protein sequence, read N- to C-terminus: Neuropeptide-like 2 (86 aa).

Residues 1-19 form the signal peptide; the sequence is MAKLAICILVFALFALALS. Propeptides lie at residues 20–34 and 45–86; these read ARVP…QEFL and IEKL…AAST.

In terms of tissue distribution, hemolymph (at protein level).

Its subcellular location is the secreted. The protein is Neuropeptide-like 2 (Nplp2) of Drosophila melanogaster (Fruit fly).